The following is a 180-amino-acid chain: Der GTPase-activating protein YihI (180 aa).

Disordered stretches follow at residues 1-90 (MSRK…QERR) and 145-180 (EPEEDEDFTAPAVKGSRNDDDLLADFDDINFDDYKG). Basic and acidic residues predominate over residues 23-32 (NRTESDVEGR). A compositionally biased stretch (basic residues) spans 33-43 (LRKRAKKRKGL). Composition is skewed to basic and acidic residues over residues 50 to 68 (SDAEEQKRQAAAQKRDPRL) and 80 to 90 (PVKKQTKQERR). Over residues 165–180 (DLLADFDDINFDDYKG) the composition is skewed to acidic residues.

This sequence belongs to the YihI family. As to quaternary structure, interacts with Der.

Functionally, a GTPase-activating protein (GAP) that modifies Der/EngA GTPase function. May play a role in ribosome biogenesis. The sequence is that of Der GTPase-activating protein YihI from Vibrio campbellii (strain ATCC BAA-1116).